A 433-amino-acid chain; its full sequence is Glutamate-1-semialdehyde 2,1-aminomutase (433 aa).

Residue Lys267 is modified to N6-(pyridoxal phosphate)lysine.

This sequence belongs to the class-III pyridoxal-phosphate-dependent aminotransferase family. HemL subfamily. As to quaternary structure, homodimer. Requires pyridoxal 5'-phosphate as cofactor.

The protein localises to the cytoplasm. The enzyme catalyses (S)-4-amino-5-oxopentanoate = 5-aminolevulinate. It participates in porphyrin-containing compound metabolism; protoporphyrin-IX biosynthesis; 5-aminolevulinate from L-glutamyl-tRNA(Glu): step 2/2. The protein is Glutamate-1-semialdehyde 2,1-aminomutase of Syntrophobacter fumaroxidans (strain DSM 10017 / MPOB).